The primary structure comprises 131 residues: Small ribosomal subunit protein uS8 (131 aa).

It belongs to the universal ribosomal protein uS8 family. Part of the 30S ribosomal subunit. Contacts proteins S5 and S12.

One of the primary rRNA binding proteins, it binds directly to 16S rRNA central domain where it helps coordinate assembly of the platform of the 30S subunit. The protein is Small ribosomal subunit protein uS8 of Burkholderia multivorans (strain ATCC 17616 / 249).